Reading from the N-terminus, the 370-residue chain is D-alanine--D-alanine ligase (370 aa).

An ATP-grasp domain is found at Lys-142 to Gln-348. Position 172-227 (Gln-172–Val-227) interacts with ATP. Asp-302, Glu-315, and Asn-317 together coordinate Mg(2+).

Belongs to the D-alanine--D-alanine ligase family. Mg(2+) serves as cofactor. The cofactor is Mn(2+).

The protein localises to the cytoplasm. It catalyses the reaction 2 D-alanine + ATP = D-alanyl-D-alanine + ADP + phosphate + H(+). Its pathway is cell wall biogenesis; peptidoglycan biosynthesis. In terms of biological role, cell wall formation. The protein is D-alanine--D-alanine ligase of Lactiplantibacillus plantarum (strain ATCC BAA-793 / NCIMB 8826 / WCFS1) (Lactobacillus plantarum).